The primary structure comprises 598 residues: Arylsulfatase J (598 aa).

A signal peptide spans Met-1–Gly-47. Ca(2+)-binding residues include Asp-82, Asp-83, and Cys-120. Cys-120 serves as the catalytic Nucleophile. A 3-oxoalanine (Cys) modification is found at Cys-120. N-linked (GlcNAc...) asparagine glycosylation occurs at Asn-155. Residue Lys-174 participates in substrate binding. His-176 is a catalytic residue. His-267 is a binding site for substrate. 2 N-linked (GlcNAc...) asparagine glycosylation sites follow: Asn-304 and Asn-316. Ca(2+)-binding residues include Asp-325 and Asn-326. Position 343 (Lys-343) interacts with substrate. N-linked (GlcNAc...) asparagine glycosylation is found at Asn-429, Asn-495, Asn-525, and Asn-563. The disordered stretch occupies residues Arg-532–Gly-598. Positions Lys-559 to Leu-583 are enriched in basic residues.

Belongs to the sulfatase family. Requires Ca(2+) as cofactor. The conversion to 3-oxoalanine (also known as C-formylglycine, FGly), of a serine or cysteine residue in prokaryotes and of a cysteine residue in eukaryotes, is critical for catalytic activity.

It is found in the secreted. The polypeptide is Arylsulfatase J (Arsj) (Mus musculus (Mouse)).